The sequence spans 176 residues: Macro domain-containing protein mll7730 (176 aa).

The Macro domain occupies 1 to 174 (MSKALDRIRI…LYLRAVAALR (174 aa)).

This sequence belongs to the MacroD-type family.

This chain is Macro domain-containing protein mll7730, found in Mesorhizobium japonicum (strain LMG 29417 / CECT 9101 / MAFF 303099) (Mesorhizobium loti (strain MAFF 303099)).